An 84-amino-acid chain; its full sequence is Small ribosomal subunit protein bS20 (84 aa).

The interval 1–32 is disordered; it reads MPRHESAKKRMRQNEKRQKRNKSQKSRVRTKI.

This sequence belongs to the bacterial ribosomal protein bS20 family.

Its function is as follows. Binds directly to 16S ribosomal RNA. In Salinibacter ruber (strain DSM 13855 / M31), this protein is Small ribosomal subunit protein bS20.